A 481-amino-acid polypeptide reads, in one-letter code: MGSISLPEKHHAVCIPYPAQGHINPMLKLAKILHHKGFHITFVNTEFNHKRLLKSRGPDALNGLPDFQFKTIPDGLPPSDVDATQDIPSLCESTTTRCLDPFRNLLAELNGPSSSQVPPVSCIVSDGVMSFTLEAAAELGVPEILFWTTSACGFLGYMHYAKLIEKGLTPLKDASYLSNGYLEQSLDWIPGMKDIRLKDLPSFLRTTNPDDYMVKFVLQETERAKKASAIILNTFQELEDDVINALSAILPPIYTIGPLQFLQKEVKDERLSVLGSNLWKEEPECLDWLDSKDPNSVVYVNFGSITVMTPGQLVEFAWGLANSKQTFLWIIRPDLVSGDSAILPPEFLEETKDRGLLASWCPQEQVLSHPAIGGFLTHSGWNSTLESICSGVPMICWPFFAEQQTNCWFCCTKWYNGLEIDNNVKRDEVESLVTELMVGEKGMDMKKKALEWKNKAEEAAKSSGGSSYSNLEKVVQVLLSK.

The active-site Proton acceptor is His22. Position 22 (His22) interacts with an anthocyanidin. The active-site Charge relay is Asp126. The UDP-alpha-D-glucose site is built by Thr148, Gln363, His378, Trp381, Asn382, Ser383, and Glu386. Ala401 contributes to the an anthocyanidin binding site. Residues Glu402 and Gln403 each coordinate UDP-alpha-D-glucose.

The protein belongs to the UDP-glycosyltransferase family. Ubiquitous. Very low expression in stems.

It catalyses the reaction 7-deoxyloganetin + UDP-alpha-D-glucose = 7-deoxyloganin + UDP + H(+). In terms of biological role, iridoid glucosyltransferase acting on genipin and 7-deoxyloganetin. No activity with 7-deoxyloganetic acid. Involved in geniposide biosynthesis. The sequence is that of 7-deoxyloganetin glucosyltransferase (UGT85A24) from Gardenia jasminoides (Cape jasmine).